Here is a 293-residue protein sequence, read N- to C-terminus: N-acetylneuraminate lyase (293 aa).

S48 and S49 together coordinate aceneuramate. Residue Y137 is the Proton donor of the active site. K165 (schiff-base intermediate with substrate) is an active-site residue. Aceneuramate is bound by residues T167, G189, D191, E192, and S208.

The protein belongs to the DapA family. NanA subfamily. As to quaternary structure, homotetramer.

It localises to the cytoplasm. The enzyme catalyses aceneuramate = aldehydo-N-acetyl-D-mannosamine + pyruvate. The protein operates within amino-sugar metabolism; N-acetylneuraminate degradation; D-fructose 6-phosphate from N-acetylneuraminate: step 1/5. Its function is as follows. Catalyzes the reversible aldol cleavage of N-acetylneuraminic acid (sialic acid; Neu5Ac) to form pyruvate and N-acetylmannosamine (ManNAc) via a Schiff base intermediate. This Staphylococcus carnosus (strain TM300) protein is N-acetylneuraminate lyase.